The primary structure comprises 288 residues: Type II restriction enzyme DpnII (288 aa).

It belongs to the DpnII type II restriction endonuclease family. As to quaternary structure, homodimer.

The catalysed reaction is Endonucleolytic cleavage of DNA to give specific double-stranded fragments with terminal 5'-phosphates.. A P subtype restriction enzyme that recognizes the double-stranded unmethylated sequence 5'-GATC-3' and cleaves before G-1. This chain is Type II restriction enzyme DpnII, found in Streptococcus pneumoniae.